Here is a 190-residue protein sequence, read N- to C-terminus: Peptidoglycan recognition protein 1 (190 aa).

The signal sequence occupies residues 1-21 (MSRRYTPLAWVLLALLGLGAA). The residue at position 22 (glutamine 22) is a Pyrrolidone carboxylic acid. Cystine bridges form between cysteine 24–cysteine 148, cysteine 40–cysteine 85, and cysteine 61–cysteine 67. The N-acetylmuramoyl-L-alanine amidase domain maps to 46-174 (QPVRYVVVSH…RDVQQTLSPG (129 aa)).

It belongs to the N-acetylmuramoyl-L-alanine amidase 2 family. As to quaternary structure, homodimer; disulfide-linked. In terms of tissue distribution, synthesized only in bone marrow. The mature protein is stored in the cytoplasmic granules of eosinophils and neutrophils but is absent from monocytes, lymphocytes, or platelets.

Its subcellular location is the secreted. The protein resides in the cytoplasmic granule. In terms of biological role, innate immunity protein that plays several important functions in antimicrobial and antitumor defense systems. Acts as a pattern receptor that binds to murein peptidoglycans (PGN) of Gram-positive bacteria and thus provides bactericidal activity. Forms an equimolar complex with heat shock protein HSPA1A and induces programmed cell death through apoptosis and necroptosis in tumor cell lines by activating the TNFR1 receptor on the target cell membrane. In addition, acts in complex with the Ca(2+)-binding protein S100A4 as a chemoattractant able to induce lymphocyte movement. Mechanistically, this complex acts as a ligand of the chemotactic receptors CCR5 and CXCR3 which are present on the cells of the immune system. Also promotes the activation of lymphocytes that become able to kill virus-infected cells as well as tumor cells by modulating the spectrum of their target-cell specificity. Induction of cytotoxicity on monocyte surface requires interaction with TREM1 receptor. The chain is Peptidoglycan recognition protein 1 (PGLYRP1) from Bos taurus (Bovine).